The primary structure comprises 599 residues: Interleukin-18 receptor accessory protein (599 aa).

Residues M1 to G19 form the signal peptide. Over F20–R356 the chain is Extracellular. 3 N-linked (GlcNAc...) asparagine glycosylation sites follow: N21, N119, and N152. Residues C46 and C126 are joined by a disulfide bond. 2 consecutive Ig-like C2-type domains span residues P149–R235 and P251–K353. Disulfide bonds link C155/C180, C175/C221, C180/C221, and C273/C337. A glycan (N-linked (GlcNAc...) asparagine) is linked at N345. A helical membrane pass occupies residues G357 to A377. Residues S378 to W599 lie on the Cytoplasmic side of the membrane. Residues K406 to M559 enclose the TIR domain. E493 is an active-site residue.

The protein belongs to the interleukin-1 receptor family. As to quaternary structure, forms a ternary complex with IL18 and IL18R1. Within this complex, IL18R1 is involved in ligand-binding and IL18RAP in signaling leading to NF-kappa-B and JNK activation. N-glycosylated. In terms of tissue distribution, detected in adrenal gland, bone marrow, brain, fetal brain, fetal liver, heart, kidney, lung, liver, peripheral blood leukocytes, placenta, prostate, salivary gland, skeletal muscle, spinal cord, testis, thymus, thyroid, trachea and uterus. Strongly expressed in peripheral blood leukocytes and spleen and, to a lesser extent, in colon. Specifically coexpressed with IL18R1 in T-helper 1 (Th1)cells.

It is found in the cell membrane. The catalysed reaction is NAD(+) + H2O = ADP-D-ribose + nicotinamide + H(+). Functionally, within the IL18 receptor complex, does not mediate IL18-binding, but involved in IL18-dependent signal transduction, leading to NF-kappa-B and JNK activation. May play a role in IL18-mediated IFNG synthesis from T-helper 1 (Th1) cells. This chain is Interleukin-18 receptor accessory protein, found in Homo sapiens (Human).